The primary structure comprises 239 residues: 7-cyano-7-deazaguanine synthase (239 aa).

7 to 17 contacts ATP; the sequence is LSGGIDSSTLL. Zn(2+) is bound by residues Cys184, Cys192, Cys195, and Cys198.

The protein belongs to the QueC family. Requires Zn(2+) as cofactor.

It catalyses the reaction 7-carboxy-7-deazaguanine + NH4(+) + ATP = 7-cyano-7-deazaguanine + ADP + phosphate + H2O + H(+). It functions in the pathway purine metabolism; 7-cyano-7-deazaguanine biosynthesis. Its function is as follows. Catalyzes the ATP-dependent conversion of 7-carboxy-7-deazaguanine (CDG) to 7-cyano-7-deazaguanine (preQ(0)). In Archaeoglobus fulgidus (strain ATCC 49558 / DSM 4304 / JCM 9628 / NBRC 100126 / VC-16), this protein is 7-cyano-7-deazaguanine synthase.